Reading from the N-terminus, the 115-residue chain is MPRRRRRRGSSGAGGRGRTCSRTVRAELSFSVSQVERSLREGHYAQRLSRTAPVYLAAVIEYLTAKVPELAGNEAQNSGERNITPLLLDMVVHNDRLLSTLFNTTTISQVAPGED.

Residues 1–21 (MPRRRRRRGSSGAGGRGRTCS) form a disordered region. Residues 87 to 115 (LLDMVVHNDRLLSTLFNTTTISQVAPGED) are docking domain.

Belongs to the histone H2A family. In terms of assembly, the nucleosome is a histone octamer containing two molecules each of H2A, H2B, H3 and H4 assembled in one H3-H4 heterotetramer and two H2A-H2B heterodimers. May be incorporated into a proportion of nucleosomes, replacing one or more H2A molecules. As to expression, present in mature sperm.

It is found in the nucleus. The protein resides in the chromosome. In terms of biological role, atypical histone H2A which can replace conventional H2A in some nucleosomes and is associated with active transcription and mRNA processing. Nucleosomes wrap and compact DNA into chromatin, limiting DNA accessibility to the cellular machineries which require DNA as a template. Histones thereby play a central role in transcription regulation, DNA repair, DNA replication and chromosomal stability. Nucleosomes containing this histone are less rigid and organize less DNA than canonical nucleosomes in vivo. They are enriched in actively transcribed genes and associate with the elongating form of RNA polymerase. They associate with spliceosome components and are required for mRNA splicing. The polypeptide is Histone H2A-Bbd type 1 (Homo sapiens (Human)).